The following is a 526-amino-acid chain: UDP-glycosyltransferase UGT5 (526 aa).

The Lumenal segment spans residues 1-474; the sequence is MIFFYFLTLT…TAAVDMPWYQ (474 aa). N49, N124, and N283 each carry an N-linked (GlcNAc...) asparagine glycan. The helical transmembrane segment at 475 to 495 threads the bilayer; sequence YLLLDVIAFLIFILVSVILII. At 496–526 the chain is on the cytoplasmic side; it reads YYGVKISLRYLCALIFGNSSSLKPTKKVKDN.

This sequence belongs to the UDP-glycosyltransferase family.

The protein resides in the microsome membrane. In terms of biological role, catalyzes the transfer of a glycosyl group from a UDP-sugar to an acceptor molecule. This is UDP-glycosyltransferase UGT5 from Dactylopius coccus (Cochineal).